The primary structure comprises 102 residues: Nucleoid-associated protein WS1681 (102 aa).

Belongs to the YbaB/EbfC family. Homodimer.

Its subcellular location is the cytoplasm. The protein resides in the nucleoid. In terms of biological role, binds to DNA and alters its conformation. May be involved in regulation of gene expression, nucleoid organization and DNA protection. The sequence is that of Nucleoid-associated protein WS1681 from Wolinella succinogenes (strain ATCC 29543 / DSM 1740 / CCUG 13145 / JCM 31913 / LMG 7466 / NCTC 11488 / FDC 602W) (Vibrio succinogenes).